Reading from the N-terminus, the 529-residue chain is MIKKVPIVLSIFCFLLLLSSSHGSIPEAFLNCISNKFSLDVSILNILHVPSNSSYDSVLKSTIQNPRFLKSPKPLAIITPVLHSHVQSAVICTKQAGLQIRIRSGGADYEGLSYRSEVPFILLDLQNLRSISVDIEDNSAWVESGATIGEFYHEIAQNSPVHAFPAGVSSSVGIGGHLSSGGFGTLLRKYGLAADNIIDAKIVDARGRILDRESMGEDLFWAIRGGGGASFGVIVSWKVKLVKVPPMVTVFILSKTYEEGGLDLLHKWQYIEHKLPEDLFLAVSIMDDSSSGNKTLMAGFMSLFLGKTEDLLKVMAENFPQLGLKKEDCLEMNWIDAAMYFSGHPIGESRSVLKNRESHLPKTCVSIKSDFIQEPQSMDALEKLWKFCREEENSPIILMLPLGGMMSKISESEIPFPYRKDVIYSMIYEIVWNCEDDESSEEYIDGLGRLEELMTPYVKQPRGSWFSTRNLYTGKNKGPGTTYSKAKEWGFRYFNNNFKKLALIKGQVDPENFFYYEQSIPPLHLQVEL.

Residues 1-23 form the signal peptide; sequence MIKKVPIVLSIFCFLLLLSSSHG. Cysteines 32 and 92 form a disulfide. N-linked (GlcNAc...) asparagine glycosylation is present at Asn52. The FAD-binding PCMH-type domain maps to 70–244; that stretch reads KSPKPLAIIT…VSWKVKLVKV (175 aa). FAD-binding positions include 102–108, Ser113, 168–169, 173–177, and Phe183; these read IRSGGAD, VS, and GIGGH. A glycan (N-linked (GlcNAc...) asparagine) is linked at Asn293. Trp465 contributes to the FAD binding site.

This sequence belongs to the oxygen-dependent FAD-linked oxidoreductase family. FAD is required as a cofactor. Expressed in leaf epidermis.

It localises to the endoplasmic reticulum. The protein localises to the vacuole. The protein resides in the vesicle. It catalyses the reaction O-acetyl-15alpha-stemmadenine + O2 = precondylocarpine acetate + H2O2. The protein operates within alkaloid biosynthesis. Functionally, component of the seco-iridoid and derivatives monoterpenoid indole alkaloids (MIAs, e.g. vinblastine, catharanthine, tabersonine, vincadifformine, vindoline, vincristine, quinine and strychnine) biosynthesis pathway. Converts O-acetylstemmadenine (OAS) to reactive acetylated intermediates, likely dihydroprecondylocarpine acetate. The chain is O-acetylstemmadenine oxidase from Catharanthus roseus (Madagascar periwinkle).